Reading from the N-terminus, the 344-residue chain is tRNA N6-adenosine threonylcarbamoyltransferase (344 aa).

Fe cation-binding residues include H119 and H123. Substrate is bound by residues 141–145 (VVSGG), D174, G187, D191, and N280. D310 serves as a coordination point for Fe cation.

It belongs to the KAE1 / TsaD family. The cofactor is Fe(2+).

Its subcellular location is the cytoplasm. It carries out the reaction L-threonylcarbamoyladenylate + adenosine(37) in tRNA = N(6)-L-threonylcarbamoyladenosine(37) in tRNA + AMP + H(+). Functionally, required for the formation of a threonylcarbamoyl group on adenosine at position 37 (t(6)A37) in tRNAs that read codons beginning with adenine. Is involved in the transfer of the threonylcarbamoyl moiety of threonylcarbamoyl-AMP (TC-AMP) to the N6 group of A37, together with TsaE and TsaB. TsaD likely plays a direct catalytic role in this reaction. The polypeptide is tRNA N6-adenosine threonylcarbamoyltransferase (Listeria innocua serovar 6a (strain ATCC BAA-680 / CLIP 11262)).